We begin with the raw amino-acid sequence, 306 residues long: D-alanine--D-alanine ligase (306 aa).

Residues 101–301 (KKILAHAGLP…FPDLVEHLVR (201 aa)) enclose the ATP-grasp domain. Position 129–185 (129–185 (VAELGLPVVVKAPTQGSSIGVYIVEREEDLEARITDAVAYGGTRVLVEKFIAGPELT)) interacts with ATP. The Mg(2+) site is built by Asp256, Glu268, and Asn270.

This sequence belongs to the D-alanine--D-alanine ligase family. Requires Mg(2+) as cofactor. Mn(2+) is required as a cofactor.

Its subcellular location is the cytoplasm. It carries out the reaction 2 D-alanine + ATP = D-alanyl-D-alanine + ADP + phosphate + H(+). It functions in the pathway cell wall biogenesis; peptidoglycan biosynthesis. Its function is as follows. Cell wall formation. The chain is D-alanine--D-alanine ligase from Desulforudis audaxviator (strain MP104C).